The following is a 185-amino-acid chain: Ribosome-recycling factor (185 aa).

It belongs to the RRF family.

It localises to the cytoplasm. In terms of biological role, responsible for the release of ribosomes from messenger RNA at the termination of protein biosynthesis. May increase the efficiency of translation by recycling ribosomes from one round of translation to another. This is Ribosome-recycling factor from Bacillus cytotoxicus (strain DSM 22905 / CIP 110041 / 391-98 / NVH 391-98).